A 633-amino-acid polypeptide reads, in one-letter code: Putative serine/threonine-protein kinase L232 (633 aa).

In terms of domain architecture, Protein kinase spans 10 to 314 (YTIVDKLSEG…QSRKLFYEIL (305 aa)). ATP is bound by residues 16 to 24 (LSEGTYGIV) and Lys39. Residue Asp133 is the Proton acceptor of the active site.

It belongs to the protein kinase superfamily. Ser/Thr protein kinase family.

It catalyses the reaction L-seryl-[protein] + ATP = O-phospho-L-seryl-[protein] + ADP + H(+). The enzyme catalyses L-threonyl-[protein] + ATP = O-phospho-L-threonyl-[protein] + ADP + H(+). This Acanthamoeba polyphaga mimivirus (APMV) protein is Putative serine/threonine-protein kinase L232.